A 142-amino-acid polypeptide reads, in one-letter code: Mitochondrial import receptor subunit TOM22 homolog (142 aa).

Low complexity predominate over residues 1–11 (MAAAVAAAGAG). The interval 1–40 (MAAAVAAAGAGEPLSPEELVPKAEAEKAEEDLEEDDDDEL) is disordered. An N-acetylalanine modification is found at Ala-2. The Cytoplasmic portion of the chain corresponds to 2–82 (AAAVAAAGAG…VAQKMYRFSR (81 aa)). Ser-15 is modified (phosphoserine). Residues 27–40 (KAEEDLEEDDDDEL) show a composition bias toward acidic residues. Residues 41–50 (DETLSERLWG) form an import sequence; necessary for mitochondrion outer membrane localization and integration in the TOM complex region. At Thr-43 the chain carries Phosphothreonine. At Ser-45 the chain carries Phosphoserine. The chain crosses the membrane as a helical span at residues 83–103 (AALWIGTTSFMILVLPVVFET). Residues 83–103 (AALWIGTTSFMILVLPVVFET) are TMD; necessary for mitochondrion outer membrane localization and integration in the TOM complex. Residues 104-142 (EKLQMEQQQQLQQRQILLGPNTGLSGGMPGALPPLPGKI) are Mitochondrial intermembrane-facing. Residues 123–142 (PNTGLSGGMPGALPPLPGKI) are C-tail signal; necessary for mitochondrion outer membrane localization and integration in the TOM complex.

Belongs to the Tom22 family. In terms of assembly, forms part of the preprotein translocase complex of the outer mitochondrial membrane (TOM complex) which consists of at least 7 different proteins (TOMM5, TOMM6, TOMM7, TOMM20, TOMM22, TOMM40 and TOMM70). Interacts with TOMM40. Interacts with PPP2R2B.

The protein resides in the mitochondrion outer membrane. Functionally, central receptor component of the translocase of the outer membrane of mitochondria (TOM complex) responsible for the recognition and translocation of cytosolically synthesized mitochondrial preproteins. Together with the peripheral receptor TOM20 functions as the transit peptide receptor and facilitates the movement of preproteins into the translocation pore. Required for the translocation across the mitochondrial outer membrane of cytochrome P450 monooxygenases. This Rattus norvegicus (Rat) protein is Mitochondrial import receptor subunit TOM22 homolog (Tomm22).